The chain runs to 442 residues: 3-dehydroquinate synthase, chloroplastic (442 aa).

A chloroplast-targeting transit peptide spans 1 to 61; the sequence is MASSFCPKQA…TTRLKVLATS (61 aa). NAD(+) contacts are provided by residues Asn-119, 150–152, Lys-155, 183–188, 208–209, Lys-221, Lys-230, and 248–251; these read DGE, GGVIGD, TT, and TLNT. Glu-263 is a binding site for a divalent metal cation. An NAD(+)-binding site is contributed by Lys-305. A divalent metal cation-binding residues include His-326 and His-343.

This sequence belongs to the sugar phosphate cyclases superfamily. Dehydroquinate synthase family. As to quaternary structure, homodimer. A divalent metal cation serves as cofactor. The cofactor is NAD(+). As to expression, highly expressed in roots. Lower expression in stems, flowers and cotyledons. Barely detected in leaves.

Its subcellular location is the plastid. The protein resides in the chloroplast. The enzyme catalyses 7-phospho-2-dehydro-3-deoxy-D-arabino-heptonate = 3-dehydroquinate + phosphate. The protein operates within metabolic intermediate biosynthesis; chorismate biosynthesis; chorismate from D-erythrose 4-phosphate and phosphoenolpyruvate: step 2/7. In terms of biological role, catalyzes the second step in the shikimate pathway. This is 3-dehydroquinate synthase, chloroplastic (DHQS) from Solanum lycopersicum (Tomato).